The sequence spans 561 residues: SH3 domain-binding protein 2 (561 aa).

The PH domain maps to 26–130 (GVAKAGYLHK…WMALLRREIG (105 aa)). Disordered stretches follow at residues 160–316 (VDIS…GACS) and 333–451 (KLKS…YEKV). The segment covering 170 to 188 (DNEDYEHDDEDDSYLEPDS) has biased composition (acidic residues). A phosphotyrosine; by SYK mark is found at Y174 and Y183. The SH3-binding motif lies at 201 to 210 (PPAYPPPPVP). Composition is skewed to pro residues over residues 202 to 213 (PAYPPPPVPTPR) and 233 to 242 (PLLPPPPPKH). Residues 252 to 266 (EDSKRDPLCPRRAEP) are compositionally biased toward basic and acidic residues. Residue S278 is modified to Phosphoserine. Pro residues predominate over residues 342-354 (RGPPTSEPPPVPA). Phosphoserine occurs at positions 416 and 427. Position 448 is a phosphotyrosine; by SYK (Y448). The SH2 domain maps to 457 to 555 (VFVNTTESCE…HQSLLLRHPY (99 aa)).

Phosphorylated. Phosphorylation at Tyr-448 may stimulate the activity of the LYN kinase. Expressed in a variety of tissues including lung, liver, skeletal muscle, kidney and pancreas.

Binds differentially to the SH3 domains of certain proteins of signal transduction pathways. Binds to phosphatidylinositols; linking the hemopoietic tyrosine kinase fes to the cytoplasmic membrane in a phosphorylation dependent mechanism. This chain is SH3 domain-binding protein 2 (SH3BP2), found in Homo sapiens (Human).